Here is a 330-residue protein sequence, read N- to C-terminus: G-protein coupled bile acid receptor 1 (330 aa).

The Extracellular portion of the chain corresponds to 1–19 (MTPNSTGEVPGPIPRGALE). An N-linked (GlcNAc...) asparagine glycan is attached at N4. Residues 20–40 (LSLALASLIIAANLLLALGIA) traverse the membrane as a helical segment. Residues 41–50 (CDRRLRSPPA) are Cytoplasmic-facing. A helical transmembrane segment spans residues 51-71 (GCFFLSLLLAGLLTGLALPTL). Residues 72-85 (PGLWRQSHRGYWSC) lie on the Extracellular side of the membrane. C85 and C155 are joined by a disulfide. Residues 86–106 (LLVYLAPNFSFLSLLANLLLV) form a helical membrane-spanning segment. Residues 107 to 125 (HGERYVAVLRPLQPPGSIR) are Cytoplasmic-facing. The chain crosses the membrane as a helical span at residues 126–146 (LALLLTWTGPLLFASLPALGW). At 147–169 (NHWGPEANCSSQTIFPAPYLYLE) the chain is on the extracellular side. A glycan (N-linked (GlcNAc...) asparagine) is linked at N154. A helical membrane pass occupies residues 170-190 (VYGLLLPAVGAAALLSAHVLL). Residues 191–230 (AAHRQLQDIRRLERAVCRDAPSALARALTWRQARAQAGAT) lie on the Cytoplasmic side of the membrane. The helical transmembrane segment at 231 to 251 (LLFGLCWGPYVATLFLSVLAY) threads the bilayer. Topologically, residues 252–261 (EQRPPLGPGT) are extracellular. Residues 262 to 282 (LLSLLSLGSASAAAVPVAMGL) form a helical membrane-spanning segment. At 283–330 (GDHRYTAPWRAAARRWLRGLRGRGSQASPGPSTAYHTSSQSSVDVDLN) the chain is on the cytoplasmic side. The interval 304-330 (GRGSQASPGPSTAYHTSSQSSVDVDLN) is disordered. Residues 307–330 (SQASPGPSTAYHTSSQSSVDVDLN) show a composition bias toward polar residues.

This sequence belongs to the G-protein coupled receptor 1 family. In terms of tissue distribution, expressed at high level in spleen. Expressed at lower level in thymus, heart, lung, liver, kidney, ileum, blood and adherent alveolar macrophage cells.

The protein resides in the cell membrane. In terms of biological role, receptor for bile acid. Bile-acid binding induces its internalization, activation of extracellular signal-regulated kinase and intracellular cAMP production. May be involved in the suppression of macrophage functions by bile acids. Involved in bile acid promoted GLP1R secretion. The protein is G-protein coupled bile acid receptor 1 (GPBAR1) of Oryctolagus cuniculus (Rabbit).